Consider the following 272-residue polypeptide: Tryptophan synthase alpha chain (272 aa).

Active-site proton acceptor residues include Glu49 and Asp60.

This sequence belongs to the TrpA family. Tetramer of two alpha and two beta chains.

It catalyses the reaction (1S,2R)-1-C-(indol-3-yl)glycerol 3-phosphate + L-serine = D-glyceraldehyde 3-phosphate + L-tryptophan + H2O. It functions in the pathway amino-acid biosynthesis; L-tryptophan biosynthesis; L-tryptophan from chorismate: step 5/5. In terms of biological role, the alpha subunit is responsible for the aldol cleavage of indoleglycerol phosphate to indole and glyceraldehyde 3-phosphate. This Methylibium petroleiphilum (strain ATCC BAA-1232 / LMG 22953 / PM1) protein is Tryptophan synthase alpha chain.